We begin with the raw amino-acid sequence, 541 residues long: Eukaryotic translation initiation factor 3 subunit L (541 aa).

Positions 308–516 (TFSDILLYIQ…IHIADTKVSH (209 aa)) constitute a PCI domain.

Belongs to the eIF-3 subunit L family. Component of the eukaryotic translation initiation factor 3 (eIF-3) complex. The eIF-3 complex interacts with pix.

The protein localises to the cytoplasm. Its function is as follows. Component of the eukaryotic translation initiation factor 3 (eIF-3) complex, which is involved in protein synthesis of a specialized repertoire of mRNAs and, together with other initiation factors, stimulates binding of mRNA and methionyl-tRNAi to the 40S ribosome. The eIF-3 complex specifically targets and initiates translation of a subset of mRNAs involved in cell proliferation. The protein is Eukaryotic translation initiation factor 3 subunit L of Drosophila pseudoobscura pseudoobscura (Fruit fly).